The sequence spans 338 residues: MSFRKYALITGSNSGLGFGIATRLLQFYQPRLQDEPEVFTVILTCRSREKAEDACRRLKEFFPDRKIRLEYVLLDLSNMASVEAAVQDIATRFPKLDFVYLNAGAWDLEGIQWLKAIFSTLINPIQALTHPTFYKETAGRVSNDSLGYIFESNVFGHFYLKNRLAELKVLRSSTKVVLTSSLVAEKKSLDFEDLQCFHGEQPYQSSKRLLDVLHYAELEKGLPFEQYLVHPGLCTTNMYETFLGPILVMCAKLGFYICRLLGSPWHTISPYVAAFAFLWTALHATKEDQSIKWGAAVTRFGHERVLSTPVELILPSEQEKALEYMTKLYQEWKKKLVS.

NADP(+) is bound by residues leucine 16, threonine 44, lysine 50, and aspartate 75. Active-site proton donor residues include serine 180 and tyrosine 203. Residues tyrosine 203, lysine 207, and threonine 236 each contribute to the NADP(+) site. The Lowers pKa of active site Tyr role is filled by lysine 207.

Belongs to the short-chain dehydrogenases/reductases (SDR) family. ERG27 subfamily. Heterotetramer of erg25, erg26, erg27 and erg28. Erg28 acts as a scaffold to tether erg27 and other 4,4-demethylation-related enzymes, forming a demethylation enzyme complex, in the endoplasmic reticulum.

The enzyme catalyses 3-dehydro-4alpha-methylzymosterol + NADPH + H(+) = 4alpha-methylzymosterol + NADP(+). It participates in steroid biosynthesis; zymosterol biosynthesis; zymosterol from lanosterol: step 5/6. The protein operates within steroid metabolism; ergosterol biosynthesis. 3-keto-steroid reductase; part of the third module of ergosterol biosynthesis pathway that includes by the late steps of the pathway. Erg27 is a catalytic component of the C-4 demethylation complex that catalyze the reduction of the keto group on the C-3. The third module or late pathway involves the ergosterol synthesis itself through consecutive reactions that mainly occur in the endoplasmic reticulum (ER) membrane. Firstly, the squalene synthase erg9 catalyzes the condensation of 2 farnesyl pyrophosphate moieties to form squalene, which is the precursor of all steroids. Secondly, squalene is converted into lanosterol by the consecutive action of the squalene epoxidase erg1 and the lanosterol synthase erg7. The lanosterol 14-alpha-demethylase erg11/cyp1 catalyzes C14-demethylation of lanosterol to produce 4,4'-dimethyl cholesta-8,14,24-triene-3-beta-ol. In the next steps, a complex process involving various demethylation, reduction and desaturation reactions catalyzed by the C-14 reductase erg24 and the C-4 demethylation complex erg25-erg26-erg27 leads to the production of zymosterol. Erg28 likely functions in the C-4 demethylation complex reaction by tethering erg26 and Erg27 to the endoplasmic reticulum or to facilitate interaction between these proteins. Then, the sterol 24-C-methyltransferase erg6 catalyzes the methyl transfer from S-adenosyl-methionine to the C-24 of zymosterol to form fecosterol. The C-8 sterol isomerase erg2 catalyzes the reaction which results in unsaturation at C-7 in the B ring of sterols and thus converts fecosterol to episterol. The sterol-C5-desaturases erg31 and erg32 then catalyze the introduction of a C-5 double bond in the B ring to produce 5-dehydroepisterol. The C-22 sterol desaturase erg5 further converts 5-dehydroepisterol into ergosta-5,7,22,24(28)-tetraen-3beta-ol by forming the C-22(23) double bond in the sterol side chain. Finally, ergosta-5,7,22,24(28)-tetraen-3beta-ol is substrate of the C-24(28) sterol reductase erg4 to produce ergosterol. In the genus Schizosaccharomyces, a second route exists between lanosterol and fecosterol, via the methylation of lanosterol to eburicol by erg6, followed by C14-demethylation by erg11/cyp1 and C4-demethylation by the demethylation complex erg25-erg26-erg27. The chain is 3-keto-steroid reductase erg27 from Schizosaccharomyces pombe (strain 972 / ATCC 24843) (Fission yeast).